We begin with the raw amino-acid sequence, 175 residues long: Myosin regulatory light chain 2, atrial isoform (175 aa).

A2 carries the post-translational modification N-acetylalanine. 2 positions are modified to phosphoserine: S22 and S23. EF-hand domains are found at residues 32–67 (AQIQEFKEAFSCIDQNRDGIICKADLRETYSQLGKV), 102–137 (DPEEAILSAFRMFDPSGKGVVNKDEFKQLLLTQADK), and 138–173 (FSPAEVEQMFALTPMDLAGNIDYKSLCYIITHGDEK). Ca(2+) contacts are provided by D45, N47, D49, and D56.

Myosin is a hexamer of 2 heavy chains and 4 light chains. As to expression, predominantly expressed in adult atrial muscle.

This Homo sapiens (Human) protein is Myosin regulatory light chain 2, atrial isoform (MYL7).